We begin with the raw amino-acid sequence, 668 residues long: Hemocyanin subunit D (668 aa).

Residues 1-22 (MDTRVLRLTLALVALSGVLADS) form the signal peptide. Cu cation-binding residues include His206, His210, and His236. An N-linked (GlcNAc...) asparagine glycan is attached at Asn322. Residues His357, His361, and His397 each contribute to the Cu cation site. An intrachain disulfide couples Cys567 to Cys614.

This sequence belongs to the tyrosinase family. Hemocyanin subfamily. 36-chain polymer consisting of 6 hexamers, each of which includes 4 different chains, A, B, C and D. Hemolymph.

The protein localises to the secreted. It localises to the extracellular space. Hemocyanins are copper-containing oxygen carriers occurring freely dissolved in the hemolymph of many mollusks and arthropods. This chain is Hemocyanin subunit D (HCD), found in Scutigera coleoptrata (House centipede).